Here is a 721-residue protein sequence, read N- to C-terminus: Polyribonucleotide nucleotidyltransferase (721 aa).

Mg(2+) is bound by residues D511 and D517. The 61-residue stretch at 577–637 (PSTDFFHINP…SGVQAAREHI (61 aa)) folds into the KH domain. Residues 654–721 (GDIHKGIVKK…KGNKISLGIA (68 aa)) enclose the S1 motif domain.

This sequence belongs to the polyribonucleotide nucleotidyltransferase family. It depends on Mg(2+) as a cofactor.

It is found in the cytoplasm. It carries out the reaction RNA(n+1) + phosphate = RNA(n) + a ribonucleoside 5'-diphosphate. Its function is as follows. Involved in mRNA degradation. Catalyzes the phosphorolysis of single-stranded polyribonucleotides processively in the 3'- to 5'-direction. In Sulfurimonas denitrificans (strain ATCC 33889 / DSM 1251) (Thiomicrospira denitrificans (strain ATCC 33889 / DSM 1251)), this protein is Polyribonucleotide nucleotidyltransferase.